A 342-amino-acid chain; its full sequence is uncharacterized protein (342 aa).

Belongs to the bacterial luciferase oxidoreductase family.

This is an uncharacterized protein from Sinorhizobium fredii (strain NBRC 101917 / NGR234).